We begin with the raw amino-acid sequence, 200 residues long: uncharacterized protein (200 aa).

This is an uncharacterized protein from Xylella fastidiosa (strain 9a5c).